The primary structure comprises 644 residues: Chaperone protein DnaK (644 aa).

Position 195 is a phosphothreonine; by autocatalysis (Thr195). The segment at 598–644 (KQAAPGAGAPGAGPGPEAAGGAQQAQAEPKKDEGVIDAEYVDVDEKK) is disordered. Over residues 612–624 (GPEAAGGAQQAQA) the composition is skewed to low complexity. Positions 632-644 (VIDAEYVDVDEKK) are enriched in acidic residues.

It belongs to the heat shock protein 70 family.

Functionally, acts as a chaperone. The chain is Chaperone protein DnaK from Koribacter versatilis (strain Ellin345).